The sequence spans 79 residues: Cell division protein ZapB (79 aa).

The stretch at 3-79 (LEVFEKLEAK…QALLGRMEEV (77 aa)) forms a coiled coil. Lys8 is subject to N6-acetyllysine. The tract at residues 34 to 65 (NNSLSQEVQNAQHQREELERENNHLKEQQNGW) is disordered. A compositionally biased stretch (polar residues) spans 35–45 (NSLSQEVQNAQ). Basic and acidic residues predominate over residues 46–60 (HQREELERENNHLKE).

It belongs to the ZapB family. As to quaternary structure, homodimer. The ends of the coiled-coil dimer bind to each other, forming polymers. Interacts with FtsZ.

The protein localises to the cytoplasm. Non-essential, abundant cell division factor that is required for proper Z-ring formation. It is recruited early to the divisome by direct interaction with FtsZ, stimulating Z-ring assembly and thereby promoting cell division earlier in the cell cycle. Its recruitment to the Z-ring requires functional FtsA or ZipA. The polypeptide is Cell division protein ZapB (Shigella boydii serotype 18 (strain CDC 3083-94 / BS512)).